Here is a 787-residue protein sequence, read N- to C-terminus: Glutamine-dependent NAD(+) synthetase (787 aa).

The 271-residue stretch at 5–275 (VTVAVSTLNQ…VEVTLATIDL (271 aa)) folds into the CN hydrolase domain. The active-site Proton acceptor; for glutaminase activity is the Glu45. Lys114 (for glutaminase activity) is an active-site residue. The Nucleophile; for glutaminase activity role is filled by Cys175. The tract at residues 325–787 (MHTPEEEIAL…KIKDRTGIPV (463 aa)) is ligase. 355-362 (PLSGGVDS) contacts ATP. Ser357 is an active-site residue. Ser703 is modified (phosphoserine).

In the C-terminal section; belongs to the NAD synthetase family.

The catalysed reaction is deamido-NAD(+) + L-glutamine + ATP + H2O = L-glutamate + AMP + diphosphate + NAD(+) + H(+). The protein operates within cofactor biosynthesis; NAD(+) biosynthesis; NAD(+) from deamido-NAD(+) (L-Gln route): step 1/1. In terms of biological role, catalyzes the ATP-dependent amidation of deamido-NAD to form NAD. Uses L-glutamine as a nitrogen source. Because of its role in energy metabolism, involved in the modulation of aged-related cardiac function, mobility, and lifespan. This chain is Glutamine-dependent NAD(+) synthetase, found in Drosophila melanogaster (Fruit fly).